The primary structure comprises 412 residues: Putative competence-damage inducible protein (412 aa).

Belongs to the CinA family.

In Caldanaerobacter subterraneus subsp. tengcongensis (strain DSM 15242 / JCM 11007 / NBRC 100824 / MB4) (Thermoanaerobacter tengcongensis), this protein is Putative competence-damage inducible protein.